Consider the following 72-residue polypeptide: ATP synthase subunit c (72 aa).

The next 2 membrane-spanning stretches (helical) occupy residues 1–21 and 48–68; these read MSLG…GAGI and MFIG…FSFI.

Belongs to the ATPase C chain family. In terms of assembly, F-type ATPases have 2 components, F(1) - the catalytic core - and F(0) - the membrane proton channel. F(1) has five subunits: alpha(3), beta(3), gamma(1), delta(1), epsilon(1). F(0) has three main subunits: a(1), b(2) and c(10-14). The alpha and beta chains form an alternating ring which encloses part of the gamma chain. F(1) is attached to F(0) by a central stalk formed by the gamma and epsilon chains, while a peripheral stalk is formed by the delta and b chains.

It is found in the cell membrane. F(1)F(0) ATP synthase produces ATP from ADP in the presence of a proton or sodium gradient. F-type ATPases consist of two structural domains, F(1) containing the extramembraneous catalytic core and F(0) containing the membrane proton channel, linked together by a central stalk and a peripheral stalk. During catalysis, ATP synthesis in the catalytic domain of F(1) is coupled via a rotary mechanism of the central stalk subunits to proton translocation. In terms of biological role, key component of the F(0) channel; it plays a direct role in translocation across the membrane. A homomeric c-ring of between 10-14 subunits forms the central stalk rotor element with the F(1) delta and epsilon subunits. The sequence is that of ATP synthase subunit c from Geobacillus stearothermophilus (Bacillus stearothermophilus).